The following is a 501-amino-acid chain: Pyruvate kinase (501 aa).

Substrate is bound at residue R50. Residues N52, S54, D85, and T86 each coordinate K(+). ATP is bound at residue 52 to 55 (NFSH). Residues R92 and K178 each contribute to the ATP site. A Mg(2+)-binding site is contributed by E243. Residues G266, D267, and T299 each contribute to the substrate site. D267 is a Mg(2+) binding site.

This sequence belongs to the pyruvate kinase family. Homotetramer. The cofactor is Mg(2+). Requires K(+) as cofactor.

The catalysed reaction is pyruvate + ATP = phosphoenolpyruvate + ADP + H(+). The protein operates within carbohydrate degradation; glycolysis; pyruvate from D-glyceraldehyde 3-phosphate: step 5/5. This Kluyveromyces lactis (strain ATCC 8585 / CBS 2359 / DSM 70799 / NBRC 1267 / NRRL Y-1140 / WM37) (Yeast) protein is Pyruvate kinase (PYK1).